The chain runs to 271 residues: D-methionine-binding lipoprotein MetQ (271 aa).

Residues 1–22 (MSLKFKSIAAISALIGTLTLVG) form the signal peptide. Residue Cys-23 is the site of N-palmitoyl cysteine attachment. Cys-23 carries the S-diacylglycerol cysteine lipid modification.

This sequence belongs to the NlpA lipoprotein family.

The protein resides in the cell membrane. Its function is as follows. This protein is a component of a D-methionine permease, a binding protein-dependent, ATP-driven transport system. This Yersinia pestis protein is D-methionine-binding lipoprotein MetQ (metQ).